The following is a 424-amino-acid chain: Phosphomethylpyrimidine synthase (424 aa).

Substrate-binding positions include asparagine 66, methionine 95, tyrosine 124, histidine 163, 185–187 (SRG), 226–229 (DGMR), and glutamate 265. Histidine 269 serves as a coordination point for Zn(2+). Phenylalanine 292 serves as a coordination point for substrate. Histidine 333 contributes to the Zn(2+) binding site. Residues cysteine 408, cysteine 411, and cysteine 415 each coordinate [4Fe-4S] cluster.

Belongs to the ThiC family. Requires [4Fe-4S] cluster as cofactor.

The catalysed reaction is 5-amino-1-(5-phospho-beta-D-ribosyl)imidazole + S-adenosyl-L-methionine = 4-amino-2-methyl-5-(phosphooxymethyl)pyrimidine + CO + 5'-deoxyadenosine + formate + L-methionine + 3 H(+). Its pathway is cofactor biosynthesis; thiamine diphosphate biosynthesis. Functionally, catalyzes the synthesis of the hydroxymethylpyrimidine phosphate (HMP-P) moiety of thiamine from aminoimidazole ribotide (AIR) in a radical S-adenosyl-L-methionine (SAM)-dependent reaction. The polypeptide is Phosphomethylpyrimidine synthase (Thermotoga sp. (strain RQ2)).